Consider the following 639-residue polypeptide: Muscarinic acetylcholine receptor M3 (639 aa).

At 1–115 the chain is on the extracellular side; sequence MLTHYQLCFQ…DPLGGHAVWQ (115 aa). Residues N16, N44, N45, N54, N97, and N101 are each glycosylated (N-linked (GlcNAc...) asparagine). The helical transmembrane segment at 116–139 threads the bilayer; sequence VVLIAFLTGIIALVTIIGNILVIV. Over 140-152 the chain is Cytoplasmic; the sequence is SFKVNKQLKTVNN. The chain crosses the membrane as a helical span at residues 153-173; that stretch reads YFLLSLACADLIIGVISMNLF. Over 174–190 the chain is Extracellular; sequence TTYIIMGHWALGNLACD. C189 and C269 are joined by a disulfide. A helical membrane pass occupies residues 191–212; sequence LWLSIDYVASNASVMNLLVISF. Residues 213–232 are Cytoplasmic-facing; sequence DRYFSITRPLTYRAKRTTKR. Residues 233–255 traverse the membrane as a helical segment; that stretch reads AGVMIGLAWIISFVLWAPAILFW. Topologically, residues 256–277 are extracellular; it reads QYFVGKRTVPLDECFIQFLSEP. A helical membrane pass occupies residues 278–300; the sequence is IITFGTAIAAFYLPVTIMSILYW. At 301-542 the chain is on the cytoplasmic side; sequence RIYKETEKRT…LIKEKKAAQT (242 aa). 2 disordered regions span residues 370 to 404 and 431 to 471; these read PNTDQGDQEHSSSDSWNNNDAAASLENSASSDEED and LPSS…GGSF. Positions 382–393 are enriched in low complexity; sequence SDSWNNNDAAAS. Residues 443–454 are compositionally biased toward basic and acidic residues; sequence ELQKSDTDSQEK. A helical transmembrane segment spans residues 543 to 563; the sequence is LSAILFAFIITWTPYNIMVLV. Over 564–576 the chain is Extracellular; that stretch reads NTFCDCVPKTVWN. Residues 577–596 traverse the membrane as a helical segment; sequence LGYWLCYINSTVNPVCYALC. Topologically, residues 597–639 are cytoplasmic; that stretch reads NKMFRNTFKMLLLCQCDKRKRRKQQYQQRQSVIFHKRIPREAS.

The protein belongs to the G-protein coupled receptor 1 family. Muscarinic acetylcholine receptor subfamily. CHRM3 sub-subfamily. Brain, heart atria, and ventricle.

The protein resides in the cell membrane. It localises to the postsynaptic cell membrane. Its function is as follows. The muscarinic acetylcholine receptor mediates various cellular responses, including inhibition of adenylate cyclase, breakdown of phosphoinositides and modulation of potassium channels through the action of G proteins. Primary transducing effect is Pi turnover. This Gallus gallus (Chicken) protein is Muscarinic acetylcholine receptor M3 (CHRM3).